We begin with the raw amino-acid sequence, 259 residues long: Pyridoxine 5'-phosphate synthase (259 aa).

Residue asparagine 6 coordinates 3-amino-2-oxopropyl phosphate. 8–9 (DH) lines the 1-deoxy-D-xylulose 5-phosphate pocket. Arginine 17 is a 3-amino-2-oxopropyl phosphate binding site. Histidine 42 serves as the catalytic Proton acceptor. The 1-deoxy-D-xylulose 5-phosphate site is built by arginine 44 and histidine 49. The active-site Proton acceptor is glutamate 69. 1-deoxy-D-xylulose 5-phosphate is bound at residue threonine 99. The active-site Proton donor is the histidine 212. 3-amino-2-oxopropyl phosphate-binding positions include glycine 213 and 234 to 235 (GH).

The protein belongs to the PNP synthase family. As to quaternary structure, homooctamer; tetramer of dimers.

The protein resides in the cytoplasm. It catalyses the reaction 3-amino-2-oxopropyl phosphate + 1-deoxy-D-xylulose 5-phosphate = pyridoxine 5'-phosphate + phosphate + 2 H2O + H(+). The protein operates within cofactor biosynthesis; pyridoxine 5'-phosphate biosynthesis; pyridoxine 5'-phosphate from D-erythrose 4-phosphate: step 5/5. Functionally, catalyzes the complicated ring closure reaction between the two acyclic compounds 1-deoxy-D-xylulose-5-phosphate (DXP) and 3-amino-2-oxopropyl phosphate (1-amino-acetone-3-phosphate or AAP) to form pyridoxine 5'-phosphate (PNP) and inorganic phosphate. This chain is Pyridoxine 5'-phosphate synthase, found in Nautilia profundicola (strain ATCC BAA-1463 / DSM 18972 / AmH).